A 253-amino-acid chain; its full sequence is Neurotrophin-3 (253 aa).

Residues 1–18 (MSILFYVMFLAYLRGVQG) form the signal peptide. Positions 19–134 (NSMDQRSLPE…AANRTSRRKR (116 aa)) are excised as a propeptide. The interval 62–89 (TLPKAEAPPREPAKSEFQPVTAMGPELL) is disordered. Asn127 is a glycosylation site (N-linked (GlcNAc...) asparagine). Disulfide bonds link Cys148–Cys213, Cys191–Cys242, and Cys201–Cys244.

Belongs to the NGF-beta family.

The protein localises to the secreted. Its function is as follows. Seems to promote the survival of visceral and proprioceptive sensory neurons. The chain is Neurotrophin-3 (NTF3) from Bos taurus (Bovine).